The following is a 763-amino-acid chain: Serine/threonine-protein kinase PknG (763 aa).

The disordered stretch occupies residues 1 to 32 (MKREHMDHDTEDVGQAAQRADPPSGTTEGRLQ). The 247-residue stretch at 160–406 (YEVKGCIAHG…SAEEMSAQLM (247 aa)) folds into the Protein kinase domain. ATP is bound by residues 166 to 174 (IAHGGLGWV) and Lys190. The active-site Proton acceptor is the Asp289.

The protein belongs to the protein kinase superfamily. Ser/Thr protein kinase family. In terms of processing, autophosphorylated.

It carries out the reaction L-seryl-[protein] + ATP = O-phospho-L-seryl-[protein] + ADP + H(+). The catalysed reaction is L-threonyl-[protein] + ATP = O-phospho-L-threonyl-[protein] + ADP + H(+). This chain is Serine/threonine-protein kinase PknG (pknG), found in Mycobacterium leprae (strain TN).